The chain runs to 246 residues: Carboxylesterase (246 aa).

S93 functions as the Nucleophile in the catalytic mechanism. Active-site charge relay system residues include D192 and H222.

This sequence belongs to the lipase/esterase LIP3/BchO family. In terms of assembly, homodimer.

The enzyme catalyses a carboxylic ester + H2O = an alcohol + a carboxylate + H(+). Functionally, involved in the detoxification of xenobiotics. Shows maximal activity with C6 substrates, with gradually decreasing activity from C8 to C12 substrates. No activity for higher chain length substrates acids rather than long-chain ones. The polypeptide is Carboxylesterase (est) (Geobacillus stearothermophilus (Bacillus stearothermophilus)).